The sequence spans 352 residues: Photosystem II D2 protein (352 aa).

Thr-2 bears the N-acetylthreonine mark. Thr-2 carries the post-translational modification Phosphothreonine. The chain crosses the membrane as a helical span at residues 40–60 (TAYLALGGWFTGTTFVTSWYT). A chlorophyll a-binding site is contributed by His-117. The helical transmembrane segment at 124–140 (GFMLRQFEIARSVKIRP) threads the bilayer. Pheophytin a is bound by residues Gln-129 and Asn-142. The chain crosses the membrane as a helical span at residues 152–165 (VFVSVFLIYPLGQS). His-197 contributes to the chlorophyll a binding site. The helical transmembrane segment at 207–227 (AALLCAIHGATVENTLFEDGD) threads the bilayer. Residues His-214 and Phe-261 each coordinate a plastoquinone. His-214 serves as a coordination point for Fe cation. Fe cation is bound at residue His-268. Residues 278–294 (GLWMSAIGVVGLALNLR) traverse the membrane as a helical segment.

It belongs to the reaction center PufL/M/PsbA/D family. PSII is composed of 1 copy each of membrane proteins PsbA, PsbB, PsbC, PsbD, PsbE, PsbF, PsbH, PsbI, PsbJ, PsbK, PsbL, PsbM, PsbT, PsbX, PsbY, PsbZ, Psb30/Ycf12, at least 3 peripheral proteins of the oxygen-evolving complex and a large number of cofactors. It forms dimeric complexes. The D1/D2 heterodimer binds P680, chlorophylls that are the primary electron donor of PSII, and subsequent electron acceptors. It shares a non-heme iron and each subunit binds pheophytin, quinone, additional chlorophylls, carotenoids and lipids. There is also a Cl(-1) ion associated with D1 and D2, which is required for oxygen evolution. The PSII complex binds additional chlorophylls, carotenoids and specific lipids. serves as cofactor.

The protein resides in the plastid. It localises to the chloroplast thylakoid membrane. The catalysed reaction is 2 a plastoquinone + 4 hnu + 2 H2O = 2 a plastoquinol + O2. Functionally, photosystem II (PSII) is a light-driven water:plastoquinone oxidoreductase that uses light energy to abstract electrons from H(2)O, generating O(2) and a proton gradient subsequently used for ATP formation. It consists of a core antenna complex that captures photons, and an electron transfer chain that converts photonic excitation into a charge separation. The D1/D2 (PsbA/PsbD) reaction center heterodimer binds P680, the primary electron donor of PSII as well as several subsequent electron acceptors. D2 is needed for assembly of a stable PSII complex. This Chlorella vulgaris (Green alga) protein is Photosystem II D2 protein.